The sequence spans 1178 residues: DNA-directed RNA polymerase subunit beta' (1178 aa).

The Zn(2+) site is built by Cys60, Cys62, Cys75, and Cys78. Asp450, Asp452, and Asp454 together coordinate Mg(2+). 4 residues coordinate Zn(2+): Cys795, Cys869, Cys876, and Cys879.

The protein belongs to the RNA polymerase beta' chain family. The RNAP catalytic core consists of 2 alpha, 1 beta, 1 beta' and 1 omega subunit. When a sigma factor is associated with the core the holoenzyme is formed, which can initiate transcription. Mg(2+) serves as cofactor. Zn(2+) is required as a cofactor.

It catalyses the reaction RNA(n) + a ribonucleoside 5'-triphosphate = RNA(n+1) + diphosphate. DNA-dependent RNA polymerase catalyzes the transcription of DNA into RNA using the four ribonucleoside triphosphates as substrates. The protein is DNA-directed RNA polymerase subunit beta' of Clostridium perfringens (strain ATCC 13124 / DSM 756 / JCM 1290 / NCIMB 6125 / NCTC 8237 / Type A).